Consider the following 239-residue polypeptide: Ribonuclease PH (239 aa).

Phosphate is bound by residues Arg86 and 124–126 (GTR).

Belongs to the RNase PH family. In terms of assembly, homohexameric ring arranged as a trimer of dimers.

The enzyme catalyses tRNA(n+1) + phosphate = tRNA(n) + a ribonucleoside 5'-diphosphate. Its function is as follows. Phosphorolytic 3'-5' exoribonuclease that plays an important role in tRNA 3'-end maturation. Removes nucleotide residues following the 3'-CCA terminus of tRNAs; can also add nucleotides to the ends of RNA molecules by using nucleoside diphosphates as substrates, but this may not be physiologically important. Probably plays a role in initiation of 16S rRNA degradation (leading to ribosome degradation) during starvation. In Rhizobium etli (strain ATCC 51251 / DSM 11541 / JCM 21823 / NBRC 15573 / CFN 42), this protein is Ribonuclease PH.